A 104-amino-acid chain; its full sequence is PLAT domain-containing protein 3 (104 aa).

One can recognise a PLAT domain in the interval 1–104; the sequence is MSLRLYDSYG…LARDASPYEL (104 aa).

The chain is PLAT domain-containing protein 3 from Arabidopsis thaliana (Mouse-ear cress).